Here is a 337-residue protein sequence, read N- to C-terminus: MDYKSAGVDVEAGYEFVARIRGAVERTRRPEQLGGLGGFGGLFALPAGYREPVLVAGTDGVGTKLKLAFALDRHDTIGIDCVAMCVNDVLAQGAEPLFFLDYLATGKLSPAQLAGVVEGIAAGCLEAGCTLLGGETAEMPGFYAAGEYDVAGFCVGIVERSQIIDGNRVQVGDALLGLSSSGVHSNGFSLVRRIVELAGLDWHHRPEDFPASLGEVLLTPTRIYVKPVRAALEAGFDIRGIAHITGGGLIENVPRALGGLGACLERNSWPVPPVFTWLERTGGVGRQDMDQTFNLGLGLVLACPTEQADALQAYLAKQGEQVLRIGAVVEAAGVRFA.

Belongs to the AIR synthase family.

It localises to the cytoplasm. The enzyme catalyses 2-formamido-N(1)-(5-O-phospho-beta-D-ribosyl)acetamidine + ATP = 5-amino-1-(5-phospho-beta-D-ribosyl)imidazole + ADP + phosphate + H(+). It participates in purine metabolism; IMP biosynthesis via de novo pathway; 5-amino-1-(5-phospho-D-ribosyl)imidazole from N(2)-formyl-N(1)-(5-phospho-D-ribosyl)glycinamide: step 2/2. This chain is Phosphoribosylformylglycinamidine cyclo-ligase, found in Gloeobacter violaceus (strain ATCC 29082 / PCC 7421).